Here is a 470-residue protein sequence, read N- to C-terminus: Neuraminidase (470 aa).

At 1 to 6 the chain is on the intravirion side; the sequence is MNPNQK. A helical transmembrane segment spans residues 7–27; the sequence is IITIGSISIAIGIISLMLQIG. The tract at residues 11 to 33 is involved in apical transport and lipid raft association; sequence GSISIAIGIISLMLQIGNIISMW. Residues 28–470 lie on the Virion surface side of the membrane; that stretch reads NIISMWASHS…GAELPFTIDK (443 aa). The hypervariable stalk region stretch occupies residues 36-90; it reads HSIQTGSQNHTGICNQRIITYENSTWVNHTYVNINNTNVVTGKDKTSVTLAGNSS. 5 N-linked (GlcNAc...) asparagine; by host glycosylation sites follow: asparagine 44, asparagine 58, asparagine 63, asparagine 70, and asparagine 88. Residues 91–470 form a head of neuraminidase region; sequence LCSISGWAIY…GAELPFTIDK (380 aa). Intrachain disulfides connect cysteine 92-cysteine 417, cysteine 124-cysteine 129, cysteine 184-cysteine 231, cysteine 233-cysteine 238, cysteine 279-cysteine 292, cysteine 281-cysteine 290, cysteine 318-cysteine 335, and cysteine 421-cysteine 447. Arginine 118 provides a ligand contact to substrate. Asparagine 146 carries an N-linked (GlcNAc...) asparagine; by host glycan. Aspartate 151 functions as the Proton donor/acceptor in the catalytic mechanism. Arginine 152 is a binding site for substrate. Asparagine 235 is a glycosylation site (N-linked (GlcNAc...) asparagine; by host). A substrate-binding site is contributed by 277–278; that stretch reads EE. Arginine 293 contacts substrate. The Ca(2+) site is built by aspartate 294, glycine 298, and aspartate 324. Position 368 (arginine 368) interacts with substrate. Tyrosine 402 functions as the Nucleophile in the catalytic mechanism. N-linked (GlcNAc...) asparagine; by host glycosylation is found at asparagine 434 and asparagine 455.

The protein belongs to the glycosyl hydrolase 34 family. Homotetramer. Ca(2+) serves as cofactor. N-glycosylated.

Its subcellular location is the virion membrane. The protein resides in the host apical cell membrane. The catalysed reaction is Hydrolysis of alpha-(2-&gt;3)-, alpha-(2-&gt;6)-, alpha-(2-&gt;8)- glycosidic linkages of terminal sialic acid residues in oligosaccharides, glycoproteins, glycolipids, colominic acid and synthetic substrates.. Inhibited by the neuraminidase inhibitors zanamivir (Relenza) and oseltamivir (Tamiflu). These drugs interfere with the release of progeny virus from infected cells and are effective against all influenza strains. Resistance to neuraminidase inhibitors is quite rare. Catalyzes the removal of terminal sialic acid residues from viral and cellular glycoconjugates. Cleaves off the terminal sialic acids on the glycosylated HA during virus budding to facilitate virus release. Additionally helps virus spread through the circulation by further removing sialic acids from the cell surface. These cleavages prevent self-aggregation and ensure the efficient spread of the progeny virus from cell to cell. Otherwise, infection would be limited to one round of replication. Described as a receptor-destroying enzyme because it cleaves a terminal sialic acid from the cellular receptors. May facilitate viral invasion of the upper airways by cleaving the sialic acid moieties on the mucin of the airway epithelial cells. Likely to plays a role in the budding process through its association with lipid rafts during intracellular transport. May additionally display a raft-association independent effect on budding. Plays a role in the determination of host range restriction on replication and virulence. Sialidase activity in late endosome/lysosome traffic seems to enhance virus replication. The chain is Neuraminidase from Aves (Human).